The sequence spans 485 residues: Calcium-dependent protein kinase 27 (485 aa).

G2 is lipidated: N-myristoyl glycine. Residues 28–290 enclose the Protein kinase domain; sequence YILGEELGRG…AAEVLGHPWM (263 aa). ATP-binding positions include 34–42 and K57; that span reads LGRGNFGLT. D156 functions as the Proton acceptor in the catalytic mechanism. S196 carries the post-translational modification Phosphoserine. Residues 295–325 form an autoinhibitory domain region; it reads ASDKPIDGVVLSRLKRFRDANKFKKVVLKFI. 4 EF-hand domains span residues 332 to 367, 368 to 403, 404 to 439, and 444 to 474; these read EEIK…LGSN, LSKT…RYKL, DRDE…DGAG, and IKQI…ESSL. Residues D345, D347, S349, N351, E356, D381, D383, N385, T387, E392, D417, D419, D421, H423, E428, D452, D454, D456, K458, and E463 each coordinate Ca(2+).

Belongs to the protein kinase superfamily. Ser/Thr protein kinase family. CDPK subfamily.

It is found in the membrane. The enzyme catalyses L-seryl-[protein] + ATP = O-phospho-L-seryl-[protein] + ADP + H(+). It carries out the reaction L-threonyl-[protein] + ATP = O-phospho-L-threonyl-[protein] + ADP + H(+). Activated by calcium. Autophosphorylation may play an important role in the regulation of the kinase activity. Its function is as follows. May play a role in signal transduction pathways that involve calcium as a second messenger. In Arabidopsis thaliana (Mouse-ear cress), this protein is Calcium-dependent protein kinase 27 (CPK27).